A 104-amino-acid polypeptide reads, in one-letter code: Replication restart protein PriB (104 aa).

An SSB domain is found at 1-101; sequence MTNRLTLSGT…LHAEQIELID (101 aa).

It belongs to the PriB family. In terms of assembly, homodimer. Interacts with PriA and DnaT. Component of the replication restart primosome. Primosome assembly occurs via a 'hand-off' mechanism. PriA binds to replication forks, subsequently PriB then DnaT bind; DnaT then displaces ssDNA to generate the helicase loading substrate.

In terms of biological role, involved in the restart of stalled replication forks, which reloads the replicative helicase on sites other than the origin of replication; the PriA-PriB pathway is the major replication restart pathway. During primosome assembly it facilitates complex formation between PriA and DnaT on DNA; stabilizes PriA on DNA. Stimulates the DNA unwinding activity of PriA helicase. This chain is Replication restart protein PriB, found in Salmonella typhi.